The sequence spans 109 residues: Small ribosomal subunit protein uS17 (109 aa).

This sequence belongs to the universal ribosomal protein uS17 family. In terms of assembly, part of the 30S ribosomal subunit.

One of the primary rRNA binding proteins, it binds specifically to the 5'-end of 16S ribosomal RNA. The sequence is that of Small ribosomal subunit protein uS17 from Methanococcus vannielii.